A 347-amino-acid chain; its full sequence is Protein RecA (347 aa).

68–75 provides a ligand contact to ATP; it reads GPESSGKT.

It belongs to the RecA family.

Its subcellular location is the cytoplasm. Functionally, can catalyze the hydrolysis of ATP in the presence of single-stranded DNA, the ATP-dependent uptake of single-stranded DNA by duplex DNA, and the ATP-dependent hybridization of homologous single-stranded DNAs. It interacts with LexA causing its activation and leading to its autocatalytic cleavage. The protein is Protein RecA of Rhodococcus jostii (strain RHA1).